Here is a 344-residue protein sequence, read N- to C-terminus: N-acetyl-gamma-glutamyl-phosphate reductase (344 aa).

Cys-148 is an active-site residue.

Belongs to the NAGSA dehydrogenase family. Type 1 subfamily.

Its subcellular location is the cytoplasm. It carries out the reaction N-acetyl-L-glutamate 5-semialdehyde + phosphate + NADP(+) = N-acetyl-L-glutamyl 5-phosphate + NADPH + H(+). It functions in the pathway amino-acid biosynthesis; L-arginine biosynthesis; N(2)-acetyl-L-ornithine from L-glutamate: step 3/4. In terms of biological role, catalyzes the NADPH-dependent reduction of N-acetyl-5-glutamyl phosphate to yield N-acetyl-L-glutamate 5-semialdehyde. The protein is N-acetyl-gamma-glutamyl-phosphate reductase of Geobacillus kaustophilus (strain HTA426).